The chain runs to 1226 residues: AF4/FMR2 family member 3 (1226 aa).

The segment covering 24–37 (RNALRRKERERRNQ) has biased composition (basic and acidic residues). Disordered stretches follow at residues 24 to 65 (RNAL…GDEL), 116 to 164 (SRAQ…RATQ), 197 to 299 (ERPP…GETN), 323 to 496 (KVEP…SNQY), and 523 to 728 (IKST…SINA). Polar residues predominate over residues 42 to 52 (DDGTFNSSYSL). A compositionally biased stretch (low complexity) spans 123–132 (SSICSTTTST). 2 stretches are compositionally biased toward polar residues: residues 251–261 (LKSSSETSVHC) and 334–344 (KDSQLVSSGHN). A compositionally biased stretch (low complexity) spans 381 to 392 (QQAAQRTALRAL). Residues 396–408 (AVVQQPNCRTSVP) show a composition bias toward polar residues. Residues 409–445 (SSKGSSSSSSSGSSSSSSDSESSSGSDSETESSSSES) show a composition bias toward low complexity. Over residues 485–496 (QNESHGSESNQY) the composition is skewed to polar residues. Residues 523–533 (IKSTCKEEQRP) are compositionally biased toward basic and acidic residues. Composition is skewed to low complexity over residues 550-561 (PPAAVAVAVSAA) and 569-579 (CAPAENAPAPA). Basic and acidic residues predominate over residues 589–607 (RRTERTSAGDGANCHRPEE). The span at 668 to 678 (TESSSSSSSSD) shows a compositional bias: low complexity. Residues 692-705 (KAQTVAASASSGND) are compositionally biased toward polar residues. Ser755 is modified (phosphoserine). 3 disordered regions span residues 783–856 (PQEP…LSAN), 879–964 (PISP…RDCK), and 1100–1138 (AAQAPSPWGASGKSTGTPSPMSPNPSPASSVGSQGSLSN). The segment covering 830–842 (REIKKSQGEKDSS) has biased composition (basic and acidic residues). Positions 843-856 (SRLATSTSNTLSAN) are enriched in polar residues. Ser881 carries the post-translational modification Phosphoserine. Residues 894–909 (EDLTSSSRPNGNSLFT) are compositionally biased toward polar residues.

This sequence belongs to the AF4 family. As to expression, preferentially expressed in lymphoid tissues, highest levels being found in the thymus.

It is found in the nucleus. Putative transcription activator that may function in lymphoid development and oncogenesis. Binds, in vitro, to double-stranded DNA. The protein is AF4/FMR2 family member 3 of Homo sapiens (Human).